The chain runs to 916 residues: Dual serine/threonine and tyrosine protein kinase (916 aa).

Positions 1 to 19 (MQRDGTRSARRMDEGDRRT) are enriched in basic and acidic residues. Positions 1-27 (MQRDGTRSARRMDEGDRRTGSAGRSGS) are disordered. The Protein kinase domain occupies 641 to 895 (PRIGRELGRG…PLMGIVQPML (255 aa)). ATP-binding positions include 647–655 (LGRGQYGVV) and Lys-670. Residue Asp-766 is the Proton acceptor of the active site.

This sequence belongs to the protein kinase superfamily. Ser/Thr protein kinase family.

The protein localises to the cytoplasm. Its subcellular location is the cell membrane. It is found in the apical cell membrane. It localises to the basolateral cell membrane. The protein resides in the cell junction. It carries out the reaction L-seryl-[protein] + ATP = O-phospho-L-seryl-[protein] + ADP + H(+). It catalyses the reaction L-threonyl-[protein] + ATP = O-phospho-L-threonyl-[protein] + ADP + H(+). The catalysed reaction is L-tyrosyl-[protein] + ATP = O-phospho-L-tyrosyl-[protein] + ADP + H(+). In terms of biological role, may act as a positive regulator of ERK phosphorylation downstream of fibroblast growth factor-receptor activation. May induce both caspase-dependent apoptosis and caspase-independent cell death. May play a role in the embryonic development. The sequence is that of Dual serine/threonine and tyrosine protein kinase (dstyk) from Xenopus laevis (African clawed frog).